A 62-amino-acid polypeptide reads, in one-letter code: Protein DsrB (62 aa).

It belongs to the DsrB family.

This chain is Protein DsrB, found in Shigella flexneri serotype 5b (strain 8401).